A 257-amino-acid chain; its full sequence is Phycoerythrobilin:ferredoxin oxidoreductase (257 aa).

It belongs to the HY2 family.

It catalyses the reaction (3Z)-phycoerythrobilin + oxidized 2[4Fe-4S]-[ferredoxin] = 15,16-dihydrobiliverdin + reduced 2[4Fe-4S]-[ferredoxin] + 2 H(+). In terms of biological role, catalyzes the two-electron reduction of the C2 and C3(1) diene system of 15,16-dihydrobiliverdin. The protein is Phycoerythrobilin:ferredoxin oxidoreductase (pebB) of Prochlorococcus marinus (strain SARG / CCMP1375 / SS120).